A 392-amino-acid chain; its full sequence is Serpin B11 (392 aa).

Residues 341–365 (EEGTEAAAATGDSIAVKSLPMRAQF) form an RCL region.

This sequence belongs to the serpin family. Ov-serpin subfamily. In terms of tissue distribution, detected in a restricted number of tissues, including lung, placenta, prostate, and tonsil.

The protein localises to the cytoplasm. Its function is as follows. Has no serine protease inhibitory activity, probably due to variants in the scaffold impairing conformational change. The sequence is that of Serpin B11 (SERPINB11) from Homo sapiens (Human).